Here is a 424-residue protein sequence, read N- to C-terminus: MPDRAQVIIRIVPGGGTKTLQQIINQLEYLSRKGKLELQRSARHLDIPVPPDQIRELAQSWVTEAGIYDESQSDDDRQQDLTTHIIVSFPAGTDQTAAYEASREWAAEMFGSGYGGGRYNYLTAYHVDRDHPHLHVVVNRRELLGHGWLKISRRHPQLNYDGLRKKMAEISLRHGIVLDATSRAERGIAERPITYAEHRRLERMQAQKIQFEDTDFDETSPEEDRRDLSQSFDPFRSDPSTGEPDRATRHDKQPLEQHARFQESAGSSIKADARIRVSLESERSAQPSASKIPVIGHFGIETSYVAEASVRKRSGIFGTSRPVTDVAMHTVKRQQRSKRRNDEEAGPSGANRKGLKAAQVDSEANVGEQDTRDDSNKAADPVSASIGTEQPEASPKRPRDRHDGELGGRKRARGNRRDDGRGGT.

Disordered regions lie at residues 206-269 (AQKI…GSSI) and 321-424 (RPVT…RGGT). Residues 212–221 (EDTDFDETSP) are compositionally biased toward acidic residues. Positions 243-261 (EPDRATRHDKQPLEQHARF) are enriched in basic and acidic residues. Positions 330–339 (TVKRQQRSKR) are enriched in basic residues. 2 stretches are compositionally biased toward basic and acidic residues: residues 394–408 (SPKR…ELGG) and 415–424 (NRRDDGRGGT).

Functionally, tumor formation by A.tumefaciens involves the transfer and integration of a defined segment (T-DNA) of Ti plasmid DNA into the plant nuclear genome. The virD operon encodes a site-specific endonuclease that cleaves at a unique site within both 24 bp direct repeats flanking the T-DNA. This chain is T-DNA border endonuclease VirD2 (virD2), found in Rhizobium radiobacter (Agrobacterium tumefaciens).